A 135-amino-acid polypeptide reads, in one-letter code: DNA-directed RNA polymerase subunit omega (135 aa).

This sequence belongs to the RNA polymerase subunit omega family. As to quaternary structure, the RNAP catalytic core consists of 2 alpha, 1 beta, 1 beta' and 1 omega subunit. When a sigma factor is associated with the core the holoenzyme is formed, which can initiate transcription.

It catalyses the reaction RNA(n) + a ribonucleoside 5'-triphosphate = RNA(n+1) + diphosphate. Promotes RNA polymerase assembly. Latches the N- and C-terminal regions of the beta' subunit thereby facilitating its interaction with the beta and alpha subunits. This Sinorhizobium medicae (strain WSM419) (Ensifer medicae) protein is DNA-directed RNA polymerase subunit omega.